A 464-amino-acid polypeptide reads, in one-letter code: Myrosinase 1 (464 aa).

Gln19 is a binding site for substrate. Residues His39 and Asp52 each contribute to the Zn(2+) site. Residues His122 and Asn166 each contribute to the substrate site. The Nucleophile role is filled by Glu167. Glu374 (proton donor) is an active-site residue. Asn397 carries an N-linked (GlcNAc...) asparagine glycan.

In terms of assembly, homodimer. Expressed in the skeletal muscle tissues surrounding the head, abdomen and thorax. Not expressed in flight muscles (at protein level).

The catalysed reaction is a thioglucoside + H2O = a sugar + a thiol.. In terms of biological role, hydrolyzes glucosinolates to a labile aglycone. This rapidly undergoes spontaneous rearrangement, eliminating sulfur to yield a number of toxic metabolites. Thereby developing a chemical defense system that exploits and mimics the host plant. The chain is Myrosinase 1 from Brevicoryne brassicae (Mealy cabbage aphid).